A 168-amino-acid polypeptide reads, in one-letter code: MSRYRPPRTAGTPLITPEGAARLRAELHELWHVRRPQVTQAVSEAAALGDRSENAEYIYGKKMLREIDSRVRFLRKRLENLKVVGERPADPNRVYFGAWVTLEDEDGEQARYRIVGPDELDLRNNQISIDSPLARALVGKELDAEVLVRTPAGEKLWFVVEIEYPPAP.

Residues 61 to 84 (KKMLREIDSRVRFLRKRLENLKVV) are a coiled coil.

This sequence belongs to the GreA/GreB family. GreB subfamily.

Necessary for efficient RNA polymerase transcription elongation past template-encoded arresting sites. The arresting sites in DNA have the property of trapping a certain fraction of elongating RNA polymerases that pass through, resulting in locked ternary complexes. Cleavage of the nascent transcript by cleavage factors such as GreA or GreB allows the resumption of elongation from the new 3'terminus. GreB releases sequences of up to 9 nucleotides in length. The protein is Transcription elongation factor GreB of Pseudomonas aeruginosa (strain ATCC 15692 / DSM 22644 / CIP 104116 / JCM 14847 / LMG 12228 / 1C / PRS 101 / PAO1).